Here is a 1014-residue protein sequence, read N- to C-terminus: SUMO-specific isopeptidase USPL1 (1014 aa).

Disordered stretches follow at residues 137-158 (TFTD…EEQP) and 275-318 (EEKP…VSDE). Basic and acidic residues predominate over residues 275-289 (EEKPVSLVHTEDQHL). Positions 355–636 (LFWKNEENMC…EFHILFWETD (282 aa)) constitute a USP domain. C364 functions as the Nucleophile in the catalytic mechanism. An SUMO-binding region spans residues 364-631 (CWLDAMLVML…PFPSSEFHIL (268 aa)). H592 serves as the catalytic Proton acceptor. 2 disordered regions span residues 794–823 (HPSF…YDKH) and 844–867 (NSQP…AGQE). Residues 802-815 (IRPPPPLPPAPKPK) are compositionally biased toward pro residues.

It belongs to the peptidase C19 family.

The protein resides in the nucleus. The protein localises to the cajal body. In terms of biological role, SUMO-specific isopeptidase involved in protein desumoylation. Specifically binds SUMO proteins with a higher affinity for sumo2 and sumo3 which it cleaves more efficiently. Also able to process full-length SUMO proteins to their mature forms. Plays a key role in RNA polymerase-II-mediated snRNA transcription in the Cajal bodies. Is a component of complexes that can bind to U snRNA genes. This chain is SUMO-specific isopeptidase USPL1 (uspl1), found in Danio rerio (Zebrafish).